The sequence spans 511 residues: ATP synthase subunit alpha (511 aa).

169–176 (GDRQTGKT) serves as a coordination point for ATP.

Belongs to the ATPase alpha/beta chains family. As to quaternary structure, F-type ATPases have 2 components, CF(1) - the catalytic core - and CF(0) - the membrane proton channel. CF(1) has five subunits: alpha(3), beta(3), gamma(1), delta(1), epsilon(1). CF(0) has three main subunits: a(1), b(2) and c(9-12). The alpha and beta chains form an alternating ring which encloses part of the gamma chain. CF(1) is attached to CF(0) by a central stalk formed by the gamma and epsilon chains, while a peripheral stalk is formed by the delta and b chains.

It localises to the cell inner membrane. It catalyses the reaction ATP + H2O + 4 H(+)(in) = ADP + phosphate + 5 H(+)(out). In terms of biological role, produces ATP from ADP in the presence of a proton gradient across the membrane. The alpha chain is a regulatory subunit. The sequence is that of ATP synthase subunit alpha from Bartonella henselae (strain ATCC 49882 / DSM 28221 / CCUG 30454 / Houston 1) (Rochalimaea henselae).